The following is a 664-amino-acid chain: Cyclic nucleotide-gated channel alpha-2 (664 aa).

Residues 1-10 show a composition bias toward polar residues; it reads MMTEKSNGVK. Residues 1–51 form a disordered region; that stretch reads MMTEKSNGVKSSPANNHNHHPPPSIKANGKDDHRAGSRPQSVAADDDTSPE. At 1 to 146 the chain is on the cytoplasmic side; sequence MMTEKSNGVK…PAGDWYYRWL (146 aa). Residues 147–168 traverse the membrane as a helical segment; it reads FVIAMPVLYNWCLLVARACFSD. Residues 169–178 lie on the Extracellular side of the membrane; that stretch reads LQRNYFVVWL. The helical transmembrane segment at 179-199 threads the bilayer; it reads VLDYFSDTVYIADLIIRLRTG. Residues 200-224 lie on the Cytoplasmic side of the membrane; the sequence is FLEQGLLVKDPKKLRDNYIHTLQFK. Residues 225–243 traverse the membrane as a helical segment; the sequence is LDVASIIPTDLIYFAVGIH. At 244–248 the chain is on the extracellular side; the sequence is SPEVR. A helical membrane pass occupies residues 249-267; the sequence is FNRLLHFARMFEFFDRTET. Residues 268–274 are Cytoplasmic-facing; that stretch reads RTSYPNI. Residues 272-380 are ion conduction pathway; the sequence is PNIFRISNLV…GNVGSMISNM (109 aa). A helical transmembrane segment spans residues 275–298; the sequence is FRISNLVLYILVIIHWNACIYYVI. Topologically, residues 299–321 are extracellular; it reads SKSIGFGVDTWVYPNITDPEYGY. Helical transmembrane passes span 322–356 and 357–381; these read LARE…LFVI and FDFL…SNMN. Residues 339–342 are selectivity filter; that stretch reads TIGE. The C-linker stretch occupies residues 382–458; the sequence is ATRAEFQAKI…STLKKVRIFQ (77 aa). The Cytoplasmic portion of the chain corresponds to 382–664; sequence ATRAEFQAKI…INTPEPTAAE (283 aa). The cyclic nucleotide-binding domain stretch occupies residues 462–582; that stretch reads AGLLVELVLK…EERGREILMK (121 aa). 3',5'-cyclic GMP is bound by residues Gly-522, Ser-525, Arg-538, and Thr-539. Positions 538 and 539 each coordinate 3',5'-cyclic AMP. A coiled-coil region spans residues 599–653; that stretch reads VQEKLEQLETNMDTLYTRFARLLAEYTGAQQKLKQRITVLETKMKQNHEDDYLSD.

This sequence belongs to the cyclic nucleotide-gated cation channel (TC 1.A.1.5) family. CNGA2 subfamily. The olfactory cyclic nucleotide-gated channel is an heterotetramer composed of CNGA2, CNGA4 and CNGB1b subunits with 2:1:1 stoichiometry. In terms of tissue distribution, olfactory neurons. Widely expressed in brain, enriched in deep cerebellar nuclei, olfactory bulb mitral cells and cerebellar Purkinje neurons. Expressed in olfactory sensory cilia (at protein level).

The protein localises to the cell projection. It is found in the cilium membrane. It catalyses the reaction Ca(2+)(in) = Ca(2+)(out). It carries out the reaction Na(+)(in) = Na(+)(out). The enzyme catalyses K(+)(in) = K(+)(out). The catalysed reaction is NH4(+)(in) = NH4(+)(out). It catalyses the reaction Rb(+)(in) = Rb(+)(out). It carries out the reaction Li(+)(in) = Li(+)(out). The enzyme catalyses Cs(+)(in) = Cs(+)(out). With respect to regulation, the channel activity is inhibited by L-cis diltiazem. Its function is as follows. Pore-forming subunit of the olfactory cyclic nucleotide-gated channel. Operates in the cilia of olfactory sensory neurons where chemical stimulation of the odorant is converted to an electrical signal. Mediates odorant-induced cAMP-dependent Ca(2+) influx triggering neuron depolarization. The rise of intracellular Ca(2+) levels potentiates the olfactory response by activating Ca(2+)-dependent Cl(-) channels, but it also serves as a negative feedback signal to desensitize the channel for rapid adaptation to odorants. Conducts cAMP- and cGMP-gated ion currents, with permeability for monovalent and divalent cations. The chain is Cyclic nucleotide-gated channel alpha-2 from Rattus norvegicus (Rat).